We begin with the raw amino-acid sequence, 180 residues long: Large ribosomal subunit protein uL5c (180 aa).

Belongs to the universal ribosomal protein uL5 family. Part of the 50S ribosomal subunit; contacts the 5S rRNA.

The protein resides in the plastid. It localises to the chloroplast. In terms of biological role, binds 5S rRNA, forms part of the central protuberance of the 50S subunit. The sequence is that of Large ribosomal subunit protein uL5c (rpl5) from Stigeoclonium helveticum (Green alga).